A 236-amino-acid polypeptide reads, in one-letter code: Small ribosomal subunit protein uS3 (236 aa).

The region spanning 39–107 is the KH type-2 domain; that stretch reads IREFLTEELK…DTSLNIVEVR (69 aa). The tract at residues 214 to 236 is disordered; sequence ASERRAVEGDNQGSSSNRRRENA.

It belongs to the universal ribosomal protein uS3 family. In terms of assembly, part of the 30S ribosomal subunit. Forms a tight complex with proteins S10 and S14.

Binds the lower part of the 30S subunit head. Binds mRNA in the 70S ribosome, positioning it for translation. The chain is Small ribosomal subunit protein uS3 from Brucella melitensis biotype 1 (strain ATCC 23456 / CCUG 17765 / NCTC 10094 / 16M).